Here is a 157-residue protein sequence, read N- to C-terminus: Ribosome maturation factor RimP (157 aa).

The protein belongs to the RimP family.

It is found in the cytoplasm. Required for maturation of 30S ribosomal subunits. This chain is Ribosome maturation factor RimP, found in Synechococcus sp. (strain JA-3-3Ab) (Cyanobacteria bacterium Yellowstone A-Prime).